The sequence spans 235 residues: 7-cyano-7-deazaguanine synthase (235 aa).

16 to 26 (FSGGQDSTTCL) contacts ATP. Zn(2+) is bound by residues Cys-195, Cys-204, Cys-207, and Cys-210.

Belongs to the QueC family. It depends on Zn(2+) as a cofactor.

The enzyme catalyses 7-carboxy-7-deazaguanine + NH4(+) + ATP = 7-cyano-7-deazaguanine + ADP + phosphate + H2O + H(+). The protein operates within purine metabolism; 7-cyano-7-deazaguanine biosynthesis. Catalyzes the ATP-dependent conversion of 7-carboxy-7-deazaguanine (CDG) to 7-cyano-7-deazaguanine (preQ(0)). The sequence is that of 7-cyano-7-deazaguanine synthase from Shewanella frigidimarina (strain NCIMB 400).